We begin with the raw amino-acid sequence, 468 residues long: UDP-N-acetylmuramate--L-alanine ligase (468 aa).

112–118 serves as a coordination point for ATP; it reads GTHGKTT.

This sequence belongs to the MurCDEF family.

The protein localises to the cytoplasm. It carries out the reaction UDP-N-acetyl-alpha-D-muramate + L-alanine + ATP = UDP-N-acetyl-alpha-D-muramoyl-L-alanine + ADP + phosphate + H(+). It functions in the pathway cell wall biogenesis; peptidoglycan biosynthesis. Its function is as follows. Cell wall formation. This is UDP-N-acetylmuramate--L-alanine ligase from Bordetella bronchiseptica (strain ATCC BAA-588 / NCTC 13252 / RB50) (Alcaligenes bronchisepticus).